Reading from the N-terminus, the 492-residue chain is Probable malate:quinone oxidoreductase 1 (492 aa).

It belongs to the MQO family. The cofactor is FAD.

The enzyme catalyses (S)-malate + a quinone = a quinol + oxaloacetate. The protein operates within carbohydrate metabolism; tricarboxylic acid cycle; oxaloacetate from (S)-malate (quinone route): step 1/1. The polypeptide is Probable malate:quinone oxidoreductase 1 (Staphylococcus epidermidis (strain ATCC 12228 / FDA PCI 1200)).